The chain runs to 224 residues: MIPPRSLGSTAALLLVLLFTTLASAIKFDLPSNAHPHTKCIWNYALSDSLVIVTASVVAKEPFDFSHQRVDIEVVDGSQHNNVYLSKKAIKGETRLAINTHSHADLGVCFKNTLTSKSGNQIPVVTIDLDVDIGADAVDYNAIANQESLSGLETEMRKLEAVANEIVNEMEYLKKRELRMADTNLSTNMRVTNFAILTLIALIALGVWQVFHLRGFFKRKYLID.

The first 25 residues, 1–25 (MIPPRSLGSTAALLLVLLFTTLASA), serve as a signal peptide directing secretion. The Lumenal portion of the chain corresponds to 26–190 (IKFDLPSNAH…ADTNLSTNMR (165 aa)). Residues 38 to 131 (TKCIWNYALS…IPVVTIDLDV (94 aa)) form the GOLD domain. Residues 191–211 (VTNFAILTLIALIALGVWQVF) traverse the membrane as a helical segment. The Cytoplasmic portion of the chain corresponds to 212–224 (HLRGFFKRKYLID).

Belongs to the EMP24/GP25L family.

Its subcellular location is the endoplasmic reticulum membrane. The protein resides in the golgi apparatus membrane. In terms of biological role, constituent of COPII-coated endoplasmic reticulum-derived transport vesicles. Required for efficient transport of a subset of secretory proteins to the Golgi. Facilitates retrograde transport from the Golgi to the endoplasmic reticulum. The sequence is that of Endoplasmic reticulum vesicle protein 25 (ERV25) from Mycosarcoma maydis (Corn smut fungus).